A 114-amino-acid polypeptide reads, in one-letter code: Chaperone protein YscY (114 aa).

In terms of assembly, binds to YscX.

The protein resides in the cytoplasm. Its function is as follows. Required for Yop secretion. Functions probably as a chaperone which stabilizes YscX within the cell, before its secretion. The protein is Chaperone protein YscY (yscY) of Yersinia enterocolitica.